Reading from the N-terminus, the 156-residue chain is ATP synthase subunit b (156 aa).

The helical transmembrane segment at 7–27 (LIGQLIAFALFVAFCMKFVWP) threads the bilayer.

This sequence belongs to the ATPase B chain family. F-type ATPases have 2 components, F(1) - the catalytic core - and F(0) - the membrane proton channel. F(1) has five subunits: alpha(3), beta(3), gamma(1), delta(1), epsilon(1). F(0) has three main subunits: a(1), b(2) and c(10-14). The alpha and beta chains form an alternating ring which encloses part of the gamma chain. F(1) is attached to F(0) by a central stalk formed by the gamma and epsilon chains, while a peripheral stalk is formed by the delta and b chains.

The protein resides in the cell inner membrane. Functionally, f(1)F(0) ATP synthase produces ATP from ADP in the presence of a proton or sodium gradient. F-type ATPases consist of two structural domains, F(1) containing the extramembraneous catalytic core and F(0) containing the membrane proton channel, linked together by a central stalk and a peripheral stalk. During catalysis, ATP synthesis in the catalytic domain of F(1) is coupled via a rotary mechanism of the central stalk subunits to proton translocation. Component of the F(0) channel, it forms part of the peripheral stalk, linking F(1) to F(0). The chain is ATP synthase subunit b from Actinobacillus pleuropneumoniae serotype 7 (strain AP76).